The sequence spans 138 residues: Small ribosomal subunit protein uS11c (138 aa).

This sequence belongs to the universal ribosomal protein uS11 family. Part of the 30S ribosomal subunit.

Its subcellular location is the plastid. It is found in the chloroplast. The polypeptide is Small ribosomal subunit protein uS11c (Phaseolus vulgaris (Kidney bean)).